The sequence spans 93 residues: Small ribosomal subunit protein bS16 (93 aa).

This sequence belongs to the bacterial ribosomal protein bS16 family.

The sequence is that of Small ribosomal subunit protein bS16 from Dictyoglomus thermophilum (strain ATCC 35947 / DSM 3960 / H-6-12).